We begin with the raw amino-acid sequence, 236 residues long: Thioredoxin-like 2-2, chloroplastic (236 aa).

Residues methionine 1–arginine 82 constitute a chloroplast transit peptide. The Thioredoxin domain occupies valine 83–threonine 220. Catalysis depends on nucleophile residues cysteine 135 and cysteine 138. Cysteine 135 and cysteine 138 are joined by a disulfide.

Belongs to the thioredoxin family.

It localises to the plastid. The protein localises to the chloroplast. Functionally, thiol-disulfide oxidoreductase that may participate in various redox reactions. Possesses insulin disulfide bonds reducing activity. This chain is Thioredoxin-like 2-2, chloroplastic, found in Arabidopsis thaliana (Mouse-ear cress).